We begin with the raw amino-acid sequence, 40 residues long: Amyloid-beta precursor protein (40 aa).

This sequence belongs to the APP family. In terms of assembly, binds, via its C-terminus, to the PID domain of several cytoplasmic proteins, including APBB family members, the APBA family, MAPK8IP1, SHC1 and NUMB and DAB1. Binding to DAB1 inhibits its serine phosphorylation. Interacts (via NPXY motif) with DAB2 (via PID domain); the interaction is impaired by tyrosine phosphorylation of the NPXY motif. Also interacts with GPCR-like protein BPP, APPBP1, IB1, KNS2 (via its TPR domains), APPBP2 (via BaSS) and DDB1. In vitro, it binds MAPT via the MT-binding domains. Associates with microtubules in the presence of ATP and in a kinesin-dependent manner. Interacts, through a C-terminal domain, with GNAO1. Interacts with CPEB1, ANKS1B and AGER. Interacts with ITM2B. Interacts with ITM2C. Interacts with IDE. Can form homodimers; dimerization is enhanced in the presence of Cu(2+) ions. Can form homodimers; this is promoted by heparin binding. Interacts with SORL1 (via N-terminal ectodomain); this interaction retains APP in the trans-Golgi network and reduces processing into soluble APP-alpha and amyloid-beta peptides. Interacts with PLD3. Interacts with VDAC1. Interacts with NSG1; could regulate APP processing. Interacts with LRRK2. Interacts (via cytoplasmic domain) with KIF5B. Interacts (via C-terminus) with APBB2/FE65L1 (via C-terminus). Interacts (via intracellular domain) with APBB3. Proteolytically processed under normal cellular conditions. Cleavage either by alpha-secretase, beta-secretase or theta-secretase leads to generation and extracellular release of soluble APP peptides, S-APP-alpha and S-APP-beta, and the retention of corresponding membrane-anchored C-terminal fragments, C80, C83 and C99. Subsequent processing of C80 and C83 by gamma-secretase yields P3 peptides. This is the major secretory pathway and is non-amyloidogenic. Alternatively, presenilin/nicastrin-mediated gamma-secretase processing of C99 releases the amyloid-beta proteins, amyloid-beta protein 40 and amyloid-beta protein 42, major components of amyloid plaques, and the cytotoxic C-terminal fragments, gamma-CTF(50), gamma-CTF(57) and gamma-CTF(59). PSEN1 cleavage is more efficient with C83 than with C99 as substrate (in vitro). Amyloid-beta protein 40 and Amyloid-beta protein 42 are cleaved by ACE. Many other minor amyloid-beta peptides, amyloid-beta 1-X peptides, are found in cerebral spinal fluid (CSF) including the amyloid-beta X-15 peptides, produced from the cleavage by alpha-secretase.

Its subcellular location is the cell membrane. The protein localises to the membrane. It localises to the perikaryon. It is found in the cell projection. The protein resides in the growth cone. Its subcellular location is the clathrin-coated pit. The protein localises to the early endosome. It localises to the cytoplasmic vesicle. In terms of biological role, functions as a cell surface receptor and performs physiological functions on the surface of neurons relevant to neurite growth, neuronal adhesion and axonogenesis. Interaction between APP molecules on neighboring cells promotes synaptogenesis. Involved in cell mobility and transcription regulation through protein-protein interactions. Can promote transcription activation through binding to APBB1-KAT5 and inhibit Notch signaling through interaction with Numb. Couples to apoptosis-inducing pathways such as those mediated by G(o) and JIP. Inhibits G(o)-alpha ATPase activity. Acts as a kinesin I membrane receptor, mediating the axonal transport of beta-secretase and presenilin 1. May be involved in copper homeostasis/oxidative stress through copper ion reduction. In vitro, copper-metallated APP induces neuronal death directly or is potentiated through Cu(2+)-mediated low-density lipoprotein oxidation. Can regulate neurite outgrowth through binding to components of the extracellular matrix such as heparin and collagen I and IV. Induces a AGER-dependent pathway that involves activation of p38 MAPK, resulting in internalization of amyloid-beta peptide and mitochondrial dysfunction in cultured cortical neurons. Provides Cu(2+) ions for GPC1 which are required for release of nitric oxide (NO) and subsequent degradation of the heparan sulfate chains on GPC1. In Felis catus (Cat), this protein is Amyloid-beta precursor protein.